The chain runs to 448 residues: Alginate biosynthesis transcriptional regulatory protein AlgB (448 aa).

In terms of domain architecture, Response regulatory spans 10 to 124 (RILLVDDESA…QLRLATAKQL (115 aa)). Asp-59 carries the post-translational modification 4-aspartylphosphate. The Sigma-54 factor interaction domain maps to 147 to 376 (LDSHSPSMMA…LRNVIERASI (230 aa)). ATP-binding positions include 175-182 (GESGTGKG) and 238-247 (ADGGTLFLDE). The H-T-H motif DNA-binding region spans 425-444 (LDQAAKTLGIDASTLYRKRK).

It participates in glycan biosynthesis; alginate biosynthesis [regulation]. Functionally, positive regulator of the alginate biosynthetic gene algD. This Pseudomonas syringae pv. tomato (strain ATCC BAA-871 / DC3000) protein is Alginate biosynthesis transcriptional regulatory protein AlgB (algB).